The following is a 264-amino-acid chain: S-adenosylmethionine decarboxylase proenzyme (264 aa).

Ser-113 acts as the Schiff-base intermediate with substrate; via pyruvic acid in catalysis. Ser-113 carries the post-translational modification Pyruvic acid (Ser); by autocatalysis. The active-site Proton acceptor; for processing activity is the His-118. Residue Cys-141 is the Proton donor; for catalytic activity of the active site.

Belongs to the prokaryotic AdoMetDC family. Type 2 subfamily. Heterooctamer of four alpha and four beta chains arranged as a tetramer of alpha/beta heterodimers. Pyruvate serves as cofactor. In terms of processing, is synthesized initially as an inactive proenzyme. Formation of the active enzyme involves a self-maturation process in which the active site pyruvoyl group is generated from an internal serine residue via an autocatalytic post-translational modification. Two non-identical subunits are generated from the proenzyme in this reaction, and the pyruvate is formed at the N-terminus of the alpha chain, which is derived from the carboxyl end of the proenzyme. The post-translation cleavage follows an unusual pathway, termed non-hydrolytic serinolysis, in which the side chain hydroxyl group of the serine supplies its oxygen atom to form the C-terminus of the beta chain, while the remainder of the serine residue undergoes an oxidative deamination to produce ammonia and the pyruvoyl group blocking the N-terminus of the alpha chain.

The catalysed reaction is S-adenosyl-L-methionine + H(+) = S-adenosyl 3-(methylsulfanyl)propylamine + CO2. It participates in amine and polyamine biosynthesis; S-adenosylmethioninamine biosynthesis; S-adenosylmethioninamine from S-adenosyl-L-methionine: step 1/1. Functionally, catalyzes the decarboxylation of S-adenosylmethionine to S-adenosylmethioninamine (dcAdoMet), the propylamine donor required for the synthesis of the polyamines spermine and spermidine from the diamine putrescine. The chain is S-adenosylmethionine decarboxylase proenzyme from Stenotrophomonas maltophilia (strain R551-3).